Consider the following 752-residue polypeptide: Coiled-coil domain-containing protein 157 (752 aa).

A compositionally biased stretch (polar residues) spans 135–154 (QQPLPQKGANQRETPTSKPT). Disordered stretches follow at residues 135 to 163 (QQPLPQKGANQRETPTSKPTTKGEPARSP) and 316 to 336 (QALKQEQGARRRQAEEDEQCL). Coiled coils occupy residues 276 to 544 (AAEQ…LLVA) and 579 to 615 (DHMERQVQSNDIRIRVLQEENGRLQSMLSKIREVAQQ). The span at 316 to 329 (QALKQEQGARRRQA) shows a compositional bias: basic and acidic residues. 2 disordered regions span residues 620-707 (LIPQ…QPSK) and 731-752 (RKRLSPGRGQASSAHQPQERPM). The span at 628-648 (SPSSKGTQGATPPVQAKSTSP) shows a compositional bias: polar residues. The span at 671 to 692 (TSPPRQPCTSPPRQPCTSPPRQ) shows a compositional bias: pro residues. Residues 693 to 707 (PCTSPSRQPCSQPSK) are compositionally biased toward polar residues.

The protein is Coiled-coil domain-containing protein 157 (CCDC157) of Homo sapiens (Human).